The chain runs to 204 residues: Urease accessory protein UreG (204 aa).

GTP is bound at residue 15–22; that stretch reads GPVGSGKT.

The protein belongs to the SIMIBI class G3E GTPase family. UreG subfamily. In terms of assembly, homodimer. UreD, UreF and UreG form a complex that acts as a GTP-hydrolysis-dependent molecular chaperone, activating the urease apoprotein by helping to assemble the nickel containing metallocenter of UreC. The UreE protein probably delivers the nickel.

It is found in the cytoplasm. Functionally, facilitates the functional incorporation of the urease nickel metallocenter. This process requires GTP hydrolysis, probably effectuated by UreG. The polypeptide is Urease accessory protein UreG (Methylobacterium sp. (strain 4-46)).